The sequence spans 520 residues: 2-methylcitrate dehydratase, mitochondrial (520 aa).

A mitochondrion-targeting transit peptide spans 1-37 (MRAFRSAANFGAASNIYRKSFTPASIASNRFVSARMS).

Belongs to the PrpD family. As to quaternary structure, monomer.

The protein localises to the mitochondrion. The catalysed reaction is (2S,3S)-2-methylcitrate = 2-methyl-cis-aconitate + H2O. The protein operates within organic acid metabolism; propanoate degradation. With respect to regulation, several bivalent metal ions, such as nickel, copper, zinc, mercury, and lead, inhibit the activity to some extent. Inhibited by structural analogs such as citrate, cis-aconitate, isocitrate, 2-methylisocitrate, tricarballylate and fluorocitrate, but not by trans-aconitate or adipate. In terms of biological role, component of the methylcitrate cycle that catalyzes the dehydration of 2-methylcitrate to 2-methyl-cis-aconitate. The methylcitrate cycle is a metabolic pathway for the consumption of propionic acid. The sequence is that of 2-methylcitrate dehydratase, mitochondrial from Yarrowia lipolytica (strain CLIB 122 / E 150) (Yeast).